Consider the following 130-residue polypeptide: Lysozyme C (130 aa).

Residues 1–130 (KIYERCELAR…LTPYIRGCGV (130 aa)) enclose the C-type lysozyme domain. 4 disulfide bridges follow: C6-C128, C30-C116, C65-C81, and C77-C95. Active-site residues include E35 and D53.

Belongs to the glycosyl hydrolase 22 family. Monomer.

The protein resides in the secreted. It carries out the reaction Hydrolysis of (1-&gt;4)-beta-linkages between N-acetylmuramic acid and N-acetyl-D-glucosamine residues in a peptidoglycan and between N-acetyl-D-glucosamine residues in chitodextrins.. In terms of biological role, lysozymes have primarily a bacteriolytic function; those in tissues and body fluids are associated with the monocyte-macrophage system and enhance the activity of immunoagents. The chain is Lysozyme C (LYZ) from Oryctolagus cuniculus (Rabbit).